The chain runs to 222 residues: Charged multivesicular body protein 3 (222 aa).

Gly2 is lipidated: N-myristoyl glycine. Residues 2 to 113 (GLFGKTQEKP…LQKSTEVMKA (112 aa)) are intramolecular interaction with C-terminus. Residues 22–54 (KIRKEMRVVDRQIRDIQREEEKVKRSVKDAAKK) adopt a coiled-coil conformation. 2 important for autoinhibitory function regions span residues 59-64 (VCVVLA) and 168-169 (IL). Residues 149–222 (ESMDDQEEME…MQSRLATLRS (74 aa)) adopt a coiled-coil conformation. The intramolecular interaction with N-terminus stretch occupies residues 151-220 (MDDQEEMEEA…EAMQSRLATL (70 aa)). The interaction with VPS4A stretch occupies residues 151-222 (MDDQEEMEEA…MQSRLATLRS (72 aa)). A Glycyl lysine isopeptide (Lys-Gly) (interchain with G-Cter in ubiquitin) cross-link involves residue Lys179. A disordered region spans residues 180-222 (APSKVTDALPEPEPSGAMAASDEEEEEEEALEAMQSRLATLRS). 3 interaction with STAMBP regions span residues 196–222 (AMAA…TLRS), 203–207 (EEEEE), and 221–222 (RS). Position 200 is a phosphoserine (Ser200). The segment covering 200–210 (SDEEEEEEEAL) has biased composition (acidic residues). Positions 201–211 (DEEEEEEEALE) match the MIT-interacting motif motif.

It belongs to the SNF7 family. Probable core component of the endosomal sorting required for transport complex III (ESCRT-III). ESCRT-III components are thought to multimerize to form a flat lattice on the perimeter membrane of the endosome. Several assembly forms of ESCRT-III may exist that interact and act sequentially. Forms a metastable monomer in solution; its core structure (without part of the putative autoinhibitory C-terminal acidic region) oligomerizes into a flat lattice via two different dimerization interfaces. In vitro, heteromerizes with CHMP2A (but not CHMP4) to form helical tubular structures that expose membrane-interacting sites on the outside whereas VPS4B can associate on the inside of the tubule. May interact with IGFBP7; the relevance of such interaction however remains unclear. Interacts with CHMP2A. Interacts with CHMP4A; the interaction requires the release of CHMP4A autoinhibition. Interacts with VPS4A. Interacts with STAMBP; the interaction appears to relieve the autoinhibition of CHMP3. Interacts with VTA1.

It is found in the cytoplasm. It localises to the cytosol. The protein resides in the membrane. The protein localises to the endosome. Its subcellular location is the late endosome membrane. Its function is as follows. Probable core component of the endosomal sorting required for transport complex III (ESCRT-III) which is involved in multivesicular bodies (MVBs) formation and sorting of endosomal cargo proteins into MVBs. MVBs contain intraluminal vesicles (ILVs) that are generated by invagination and scission from the limiting membrane of the endosome and mostly are delivered to lysosomes enabling degradation of membrane proteins, such as stimulated growth factor receptors, lysosomal enzymes and lipids. The MVB pathway appears to require the sequential function of ESCRT-O, -I,-II and -III complexes. ESCRT-III proteins mostly dissociate from the invaginating membrane before the ILV is released. The ESCRT machinery also functions in topologically equivalent membrane fission events, such as the terminal stages of cytokinesis and the budding of enveloped viruses (lentiviruses). ESCRT-III proteins are believed to mediate the necessary vesicle extrusion and/or membrane fission activities, possibly in conjunction with the AAA ATPase VPS4. Selectively binds to phosphatidylinositol 3,5-bisphosphate PtdIns(3,5)P2 and PtdIns(3,4)P2 in preference to other phosphoinositides tested. Involved in late stages of cytokinesis. Plays a role in endosomal sorting/trafficking of EGF receptor. The polypeptide is Charged multivesicular body protein 3 (CHMP3) (Macaca fascicularis (Crab-eating macaque)).